An 85-amino-acid polypeptide reads, in one-letter code: Large ribosomal subunit protein bL27 (85 aa).

This sequence belongs to the bacterial ribosomal protein bL27 family.

The protein is Large ribosomal subunit protein bL27 of Sodalis glossinidius (strain morsitans).